Reading from the N-terminus, the 340-residue chain is Transcription initiation factor IIB (340 aa).

The segment at 16 to 49 (VKMICSECREDPPNLVEEFSSGDTVCGSCGLVLG) adopts a TFIIB-type zinc-finger fold. Residues C20, C23, C41, and C44 each contribute to the Zn(2+) site. A run of 2 repeats spans residues 128-204 (MCDA…TLQR) and 239-315 (FCNR…LLHA).

The protein belongs to the TFIIB family. In terms of assembly, associates with TFIID-IIA (DA complex) to form TFIID-IIA-IIB (DAB-complex) which is then recognized by polymerase II.

It localises to the nucleus. Its function is as follows. General factor that plays a major role in the activation of eukaryotic genes transcribed by RNA polymerase II. This is Transcription initiation factor IIB (sua7) from Schizosaccharomyces pombe (strain 972 / ATCC 24843) (Fission yeast).